We begin with the raw amino-acid sequence, 370 residues long: (5-formylfuran-3-yl)methyl phosphate transaminase (370 aa).

Lysine 222 bears the N6-(pyridoxal phosphate)lysine mark.

This sequence belongs to the class-I pyridoxal-phosphate-dependent aminotransferase family. In terms of assembly, homodimer. Pyridoxal 5'-phosphate serves as cofactor.

It is found in the cytoplasm. The enzyme catalyses 4-(hydroxymethyl)-2-furancarboxaldehyde phosphate + L-alanine = [5-(aminomethyl)-3-furyl]methyl phosphate + pyruvate. It functions in the pathway cofactor biosynthesis; methanofuran biosynthesis. Its function is as follows. Catalyzes the transamination reaction between 4-(hydroxymethyl)-2-furancarboxaldehyde phosphate (4-HFC-P) and alanine to produce pyruvate and 5-(aminomethyl)-3-furanmethanol phosphate (F1-P), the precursor for the furan moiety in methanofuran. The sequence is that of (5-formylfuran-3-yl)methyl phosphate transaminase from Methanocaldococcus jannaschii (strain ATCC 43067 / DSM 2661 / JAL-1 / JCM 10045 / NBRC 100440) (Methanococcus jannaschii).